A 643-amino-acid polypeptide reads, in one-letter code: SURP and G-patch domain-containing protein 1 (643 aa).

Disordered regions lie at residues 48 to 69 (ARMEQKARQSHVPSPQPPHPGE) and 97 to 119 (KAQTSTDSAPRAPPSMPTPSSLK). Residue Thr128 is modified to Phosphothreonine. The stretch at 187–229 (VIEKLARFVAEGGPELEKVAMEDYKDNPAFTFLHDKNSREFLY) is one SURP motif 1 repeat. The residue at position 252 (Ser252) is a Phosphoserine. One copy of the SURP motif 2 repeat lies at 262-305 (LAEKLARFIADGGPEVETIALQNNRENQAFSFLYDPNSQGYRYY). Disordered stretches follow at residues 316 to 335 (KAGSTGSFPAPAPNPSLRRK) and 360 to 393 (AVNPTPSIPGKPTATAAVKRKRKSRWGPEEDKVE). Phosphoserine is present on Ser322. Residues 378-384 (KRKRKSR) carry the Nuclear localization signal motif. Phosphoserine occurs at positions 407, 409, 412, and 483. The 48-residue stretch at 560–607 (VENIGYQMLMKMGWKEGEGLGTEGQGIKNPVNKGATTIDGAGFGIDRP) folds into the G-patch domain.

As to quaternary structure, component of the spliceosome.

Its subcellular location is the nucleus. Its function is as follows. Plays a role in pre-mRNA splicing. The sequence is that of SURP and G-patch domain-containing protein 1 (Sugp1) from Mus musculus (Mouse).